The primary structure comprises 119 residues: Large ribosomal subunit protein bL17 (119 aa).

It belongs to the bacterial ribosomal protein bL17 family. Part of the 50S ribosomal subunit. Contacts protein L32.

This Psychrobacter arcticus (strain DSM 17307 / VKM B-2377 / 273-4) protein is Large ribosomal subunit protein bL17.